We begin with the raw amino-acid sequence, 165 residues long: Small ribosomal subunit protein uS5 (165 aa).

Residues 10–73 (LVEKLVSVDR…EAAKRNMITV (64 aa)) enclose the S5 DRBM domain.

It belongs to the universal ribosomal protein uS5 family. As to quaternary structure, part of the 30S ribosomal subunit. Contacts proteins S4 and S8.

In terms of biological role, with S4 and S12 plays an important role in translational accuracy. Its function is as follows. Located at the back of the 30S subunit body where it stabilizes the conformation of the head with respect to the body. This Psychrobacter sp. (strain PRwf-1) protein is Small ribosomal subunit protein uS5.